A 130-amino-acid chain; its full sequence is Histone H2A type 1-C (130 aa).

Residues 1–22 (MSGRGKQGGKARAKAKSRSSRA) form a disordered region. Residue Ser2 is modified to N-acetylserine. Residue Ser2 is modified to Phosphoserine; by RPS6KA5. Arg4 carries the post-translational modification Citrulline; alternate. Arg4 carries the symmetric dimethylarginine; by PRMT5; alternate modification. 2 positions are modified to N6-(2-hydroxyisobutyryl)lysine; alternate: Lys6 and Lys10. Lys6 bears the N6-acetyllysine; alternate mark. Basic residues predominate over residues 7-19 (QGGKARAKAKSRS). N6-(beta-hydroxybutyryl)lysine; alternate occurs at positions 10 and 14. Position 10 is an N6-lactoyllysine; alternate (Lys10). The residue at position 10 (Lys10) is an N6-succinyllysine; alternate. A Glycyl lysine isopeptide (Lys-Gly) (interchain with G-Cter in ubiquitin); alternate cross-link involves residue Lys14. Lys16 participates in a covalent cross-link: Glycyl lysine isopeptide (Lys-Gly) (interchain with G-Cter in ubiquitin). Position 37 is an N6-(2-hydroxyisobutyryl)lysine; alternate (Lys37). N6-(beta-hydroxybutyryl)lysine; alternate is present on Lys37. Lys37 is subject to N6-crotonyllysine; alternate. Residues Lys75 and Lys76 each carry the N6-(2-hydroxyisobutyryl)lysine modification. At Lys96 the chain carries N6-(2-hydroxyisobutyryl)lysine; alternate. N6-(beta-hydroxybutyryl)lysine; alternate is present on Lys96. Lys96 carries the post-translational modification N6-succinyllysine; alternate. Lys96 bears the N6-glutaryllysine; alternate mark. Residue Gln105 is modified to N5-methylglutamine. Position 119 is an N6-(2-hydroxyisobutyryl)lysine; alternate (Lys119). An N6-(beta-hydroxybutyryl)lysine; alternate modification is found at Lys119. Residues Lys119 and Lys120 each carry the N6-crotonyllysine; alternate modification. Lys119 and Lys120 each carry N6-glutaryllysine; alternate. Lys120 is covalently cross-linked (Glycyl lysine isopeptide (Lys-Gly) (interchain with G-Cter in ubiquitin); alternate). Position 121 is a phosphothreonine; by DCAF1 (Thr121). Lys126 carries the N6-crotonyllysine; alternate modification. Lys126 is subject to N6-glutaryllysine; alternate.

This sequence belongs to the histone H2A family. The nucleosome is a histone octamer containing two molecules each of H2A, H2B, H3 and H4 assembled in one H3-H4 heterotetramer and two H2A-H2B heterodimers. The octamer wraps approximately 147 bp of DNA. Deiminated on Arg-4 in granulocytes upon calcium entry. Post-translationally, monoubiquitination of Lys-120 (H2AK119Ub) by RING1, TRIM37 and RNF2/RING2 complex gives a specific tag for epigenetic transcriptional repression and participates in X chromosome inactivation of female mammals. It is involved in the initiation of both imprinted and random X inactivation. Ubiquitinated H2A is enriched in inactive X chromosome chromatin. Ubiquitination of H2A functions downstream of methylation of 'Lys-27' of histone H3 (H3K27me). H2AK119Ub by RNF2/RING2 can also be induced by ultraviolet and may be involved in DNA repair. Monoubiquitination of Lys-120 (H2AK119Ub) by TRIM37 may promote transformation of cells in a number of breast cancers. Following DNA double-strand breaks (DSBs), it is ubiquitinated through 'Lys-63' linkage of ubiquitin moieties by the E2 ligase UBE2N and the E3 ligases RNF8 and RNF168, leading to the recruitment of repair proteins to sites of DNA damage. Ubiquitination at Lys-14 and Lys-16 (H2AK13Ub and H2AK15Ub, respectively) in response to DNA damage is initiated by RNF168 that mediates monoubiquitination at these 2 sites, and 'Lys-63'-linked ubiquitin are then conjugated to monoubiquitin; RNF8 is able to extend 'Lys-63'-linked ubiquitin chains in vitro. Deubiquitinated by USP51 at Lys-14 and Lys-16 (H2AK13Ub and H2AK15Ub, respectively) after damaged DNA is repaired. H2AK119Ub and ionizing radiation-induced 'Lys-63'-linked ubiquitination (H2AK13Ub and H2AK15Ub) are distinct events. In terms of processing, phosphorylation on Ser-2 (H2AS1ph) is enhanced during mitosis. Phosphorylation on Ser-2 by RPS6KA5/MSK1 directly represses transcription. Acetylation of H3 inhibits Ser-2 phosphorylation by RPS6KA5/MSK1. Phosphorylation at Thr-121 (H2AT120ph) by DCAF1 is present in the regulatory region of many tumor suppresor genes and down-regulates their transcription. Glutamine methylation at Gln-105 (H2AQ104me) by FBL is specifically dedicated to polymerase I. It is present at 35S ribosomal DNA locus and impairs binding of the FACT complex. Post-translationally, symmetric dimethylation on Arg-4 by the PRDM1/PRMT5 complex may play a crucial role in the germ-cell lineage. In terms of processing, crotonylation (Kcr) is specifically present in male germ cells and marks testis-specific genes in post-meiotic cells, including X-linked genes that escape sex chromosome inactivation in haploid cells. Crotonylation marks active promoters and enhancers and confers resistance to transcriptional repressors. It is also associated with post-meiotically activated genes on autosomes. Lactylated in macrophages by EP300/P300 by using lactoyl-CoA directly derived from endogenous or exogenous lactate, leading to stimulates gene transcription.

It is found in the nucleus. The protein localises to the chromosome. Core component of nucleosome. Nucleosomes wrap and compact DNA into chromatin, limiting DNA accessibility to the cellular machineries which require DNA as a template. Histones thereby play a central role in transcription regulation, DNA repair, DNA replication and chromosomal stability. DNA accessibility is regulated via a complex set of post-translational modifications of histones, also called histone code, and nucleosome remodeling. This is Histone H2A type 1-C from Homo sapiens (Human).